A 193-amino-acid polypeptide reads, in one-letter code: dCTP deaminase (193 aa).

DCTP-binding positions include 110-115, Asp128, 136-138, Tyr171, Lys178, and Gln182; these read RSSLAR and VLE. The Proton donor/acceptor role is filled by Glu138.

The protein belongs to the dCTP deaminase family. Homotrimer.

The enzyme catalyses dCTP + H2O + H(+) = dUTP + NH4(+). Its pathway is pyrimidine metabolism; dUMP biosynthesis; dUMP from dCTP (dUTP route): step 1/2. Functionally, catalyzes the deamination of dCTP to dUTP. The polypeptide is dCTP deaminase (Buchnera aphidicola subsp. Acyrthosiphon pisum (strain APS) (Acyrthosiphon pisum symbiotic bacterium)).